The primary structure comprises 262 residues: GTP cyclohydrolase 1 type 2 homolog (262 aa).

A divalent metal cation is bound by residues H64, H65, D103, H224, and E228.

Belongs to the GTP cyclohydrolase I type 2/NIF3 family. In terms of assembly, homohexamer.

This chain is GTP cyclohydrolase 1 type 2 homolog, found in Clostridium perfringens (strain 13 / Type A).